A 221-amino-acid polypeptide reads, in one-letter code: Large ribosomal subunit protein uL4 (221 aa).

Positions 46 to 74 (AGTASTKTRSEVSGGGRKPWPQKHTGRAR) are disordered.

The protein belongs to the universal ribosomal protein uL4 family. Part of the 50S ribosomal subunit.

Functionally, one of the primary rRNA binding proteins, this protein initially binds near the 5'-end of the 23S rRNA. It is important during the early stages of 50S assembly. It makes multiple contacts with different domains of the 23S rRNA in the assembled 50S subunit and ribosome. Its function is as follows. Forms part of the polypeptide exit tunnel. The protein is Large ribosomal subunit protein uL4 of Petrotoga mobilis (strain DSM 10674 / SJ95).